Here is a 143-residue protein sequence, read N- to C-terminus: Flagellar assembly factor FliW (143 aa).

The protein belongs to the FliW family. As to quaternary structure, interacts with translational regulator CsrA and flagellin(s).

Its subcellular location is the cytoplasm. Functionally, acts as an anti-CsrA protein, binds CsrA and prevents it from repressing translation of its target genes, one of which is flagellin. Binds to flagellin and participates in the assembly of the flagellum. This is Flagellar assembly factor FliW from Clostridium botulinum (strain ATCC 19397 / Type A).